The following is a 508-amino-acid chain: Maturase K (508 aa).

Belongs to the intron maturase 2 family. MatK subfamily.

Its subcellular location is the plastid. It localises to the chloroplast. Functionally, usually encoded in the trnK tRNA gene intron. Probably assists in splicing its own and other chloroplast group II introns. The chain is Maturase K from Lupinus cosentinii (West Australian blue lupine).